Here is a 189-residue protein sequence, read N- to C-terminus: MAIKLIVGLRNPGSAYEQTRHNAGAWLVTALAQRHNSHFKIDKKMQAELTEIDINNHPCRLLLPLTFMNHSGQTTRIISQFYKIEPGEILIVHDELDLPVGRIKLKTGGGHGGHNGLRDITAQLGTGEFHRLRIGIGHPGHKDLVHQYVLSRPSMHDRQQIYDAIDRGIAIIPIVLSGDIARAMNQVNA.

Tyr16 serves as a coordination point for tRNA. Catalysis depends on His21, which acts as the Proton acceptor. TRNA is bound by residues Phe67, Asn69, and Asn115.

It belongs to the PTH family. Monomer.

Its subcellular location is the cytoplasm. It catalyses the reaction an N-acyl-L-alpha-aminoacyl-tRNA + H2O = an N-acyl-L-amino acid + a tRNA + H(+). Its function is as follows. Hydrolyzes ribosome-free peptidyl-tRNAs (with 1 or more amino acids incorporated), which drop off the ribosome during protein synthesis, or as a result of ribosome stalling. Functionally, catalyzes the release of premature peptidyl moieties from peptidyl-tRNA molecules trapped in stalled 50S ribosomal subunits, and thus maintains levels of free tRNAs and 50S ribosomes. This chain is Peptidyl-tRNA hydrolase, found in Legionella pneumophila (strain Lens).